We begin with the raw amino-acid sequence, 442 residues long: Chitinase-like protein Idgf4 (442 aa).

The signal sequence occupies residues Met1 to Ala21. The GH18 domain maps to His25–Leu442. Cysteines 29 and 56 form a disulfide. N-linked (GlcNAc...) asparagine glycosylation occurs at Asn224. Cys343 and Cys426 are oxidised to a cystine.

This sequence belongs to the glycosyl hydrolase 18 family. IDGF subfamily. Glycosylated. In terms of tissue distribution, primarily expressed in yolk cells and fat body. In larvae, it is expressed in the imaginal ring, the salivary duct, large salivary gland cells and weakly expressed in imaginal disks. More strongly expressed than Idgf1 and Idgf3.

The protein resides in the secreted. In terms of biological role, cooperates with insulin-like peptides to stimulate the proliferation, polarization and motility of imaginal disk cells. May act by stabilizing the binding of insulin-like peptides to its receptor through a simultaneous interaction with both molecules to form a multiprotein signaling complex. The polypeptide is Chitinase-like protein Idgf4 (Idgf4) (Drosophila melanogaster (Fruit fly)).